Consider the following 961-residue polypeptide: MVKAYLDNVRKYIPHYWPMTTFVHHNPLHGFEDMPFKEALKQASKLYKAKVYMDPDYYVELYKEGIIKRDILEKNLFEFLKSIGLQMYFAESKKFITEISQDWKYYKVKSSTTPDINLIDYFNQKIVKDEDTLFQELIEDMMLSEILDAILEDNTTDIIEKEILEFVARFLDEGQTTMSMPEREKGMFGAFKLYEGLNTSLNEEEYADTILHELSPKNVERYILNHLLKDFGWAAFIKYREDNEDYYFQQIHPASLLEYLAVRLHYEKKYLNHYPISNFVELQKAFEQNKTLFVLKLLKAKNILPSKYIDRLEEKDSPKAILSDYLSEEVFLEAYRIQNIANELLLHLDKQKDITDFAFLIEKLKEEEGYIWLKSLEDSYIKEYTIDFLQSNEKIQRDILASAVFCIDVRSEAIRRHIERLGNYNTYGVAGFFGTPIAFIEFDKGHEQYLCPALIKPQKIIFELPEDEHHDYKTKHNINYTFKKTLESLKNNPYTPFFMVEAMGWLFGVNLFGKTLFPDFTLKILSFIKAKKPKTRFTIDKLSQEEIEFYAQKFFIQKIQEAYHQEFKKHINDKKAKDLFEAIINENHKGIDERILEILKTKYNINKESFELEKIRLSNVGYTEEEQIKLVENFLKLIGLTENIPKFVLLIAHGSTSDNNPFESALDCGACGGNNGLPNVRILASIANRNQIRKGLEKVGIKIPEDTIFIPGIHNTTTDEITFYDTEVMPQKDRALFDKIVKDFKIASQKTREERAKTLPYAGSGDRIPVRAIDWSETRPEWGLSKNMGVYVGKRSSTQNIALKNRFFMQSYTWEIDKDNKILKNILSGPFIIGEWINMEHYFSTTDNERLGAGSKVYHNVVAKVGVWTGNYGDLRTGLPYQTVYHDGVPYHEPIRLLTFIEAPAEKVLEAAQEVKEALKLVVNEWVRLIIIDKLKGVAYTFKDGNLEVLVDSRGINQFVI.

Zn(2+) contacts are provided by C406, D408, H653, and C668.

It belongs to the inorganic carbon transporter (TC 9.A.2) DabA family. As to quaternary structure, forms a complex with DabB. Zn(2+) serves as cofactor.

The protein localises to the cell inner membrane. Part of an energy-coupled inorganic carbon pump. The polypeptide is Probable inorganic carbon transporter subunit DabA (Hydrogenobaculum sp. (strain Y04AAS1)).